The chain runs to 843 residues: Neuroligin-1 (843 aa).

The N-terminal stretch at Met1 to Ser45 is a signal peptide. Topologically, residues Gln46–Ser697 are extracellular. A glycan (N-linked (GlcNAc...) (complex) asparagine) is linked at Asn109. A disulfide bond links Cys117 and Cys153. The interval Leu167–Gly190 is disordered. Positions Leu175–Ile186 are enriched in acidic residues. 2 N-linked (GlcNAc...) (complex) asparagine glycosylation sites follow: Asn303 and Asn343. Disulfide bonds link Cys342-Cys353 and Cys512-Cys546. An N-linked (GlcNAc...) asparagine glycan is attached at Asn547. The segment at Thr647–Asp688 is disordered. A compositionally biased stretch (polar residues) spans Lys661 to Phe670. O-linked (GalNAc...) serine glycosylation is found at Ser683 and Ser686. A helical membrane pass occupies residues Val698–Tyr718. The Cytoplasmic segment spans residues Tyr719–Val843. The disordered stretch occupies residues Gly822 to Val843. Positions Pro831–Val843 are enriched in basic residues.

Belongs to the type-B carboxylesterase/lipase family. In terms of assembly, interacts with neurexins NRXN1, NRXN2 and NRXN3. Interaction with neurexins is mediated by heparan sulfate glycan modification on neurexin. Interacts (via its C-terminus) with DLG4/PSD-95 (via PDZ domain 3). Interacts with AIP1, GOPC and PDZRN3. Interacts with NLGN3. As to expression, brain and arteries (at protein level). Expressed in olfactory bulb. Detected in brain.

The protein resides in the cell membrane. It is found in the postsynaptic density. The protein localises to the synaptic cleft. It localises to the synaptic cell membrane. In terms of biological role, cell surface protein involved in cell-cell-interactions via its interactions with neurexin family members. Plays a role in synapse function and synaptic signal transmission, and probably mediates its effects by recruiting and clustering other synaptic proteins. May promote the initial formation of synapses, but is not essential for this. In vitro, triggers the de novo formation of presynaptic structures. May be involved in specification of excitatory synapses. Required to maintain wakefulness quality and normal synchrony of cerebral cortex activity during wakefulness and sleep. The protein is involved in nervous system development. The chain is Neuroligin-1 (Nlgn1) from Mus musculus (Mouse).